The sequence spans 75 residues: Probable protein BRICK1-B (75 aa).

A coiled-coil region spans residues 41–72 (MSCRSRLATLNEKLTTLERRIEYIEARVTKGE).

This sequence belongs to the BRK1 family.

The protein resides in the cytoplasm. The protein localises to the cytoskeleton. Involved in regulation of actin and microtubule organization. Part of a WAVE complex that activates the Arp2/3 complex. The chain is Probable protein BRICK1-B (brk1-b) from Xenopus laevis (African clawed frog).